We begin with the raw amino-acid sequence, 213 residues long: Probable nicotinate-nucleotide adenylyltransferase (213 aa).

The protein belongs to the NadD family.

It catalyses the reaction nicotinate beta-D-ribonucleotide + ATP + H(+) = deamido-NAD(+) + diphosphate. Its pathway is cofactor biosynthesis; NAD(+) biosynthesis; deamido-NAD(+) from nicotinate D-ribonucleotide: step 1/1. Functionally, catalyzes the reversible adenylation of nicotinate mononucleotide (NaMN) to nicotinic acid adenine dinucleotide (NaAD). This Escherichia coli O139:H28 (strain E24377A / ETEC) protein is Probable nicotinate-nucleotide adenylyltransferase.